A 325-amino-acid polypeptide reads, in one-letter code: Anthranilate phosphoribosyltransferase (325 aa).

Residues Gly-73, 76 to 77, Thr-81, 83 to 86, 100 to 108, and Ser-112 contribute to the 5-phospho-alpha-D-ribose 1-diphosphate site; these read GD, NIST, and KHGNVSITS. Residue Gly-73 participates in anthranilate binding. Ser-85 contributes to the Mg(2+) binding site. Anthranilate is bound at residue Asn-103. Arg-158 contributes to the anthranilate binding site. Mg(2+) is bound by residues Asp-216 and Glu-217.

Belongs to the anthranilate phosphoribosyltransferase family. Homodimer. Requires Mg(2+) as cofactor.

It catalyses the reaction N-(5-phospho-beta-D-ribosyl)anthranilate + diphosphate = 5-phospho-alpha-D-ribose 1-diphosphate + anthranilate. Its pathway is amino-acid biosynthesis; L-tryptophan biosynthesis; L-tryptophan from chorismate: step 2/5. In terms of biological role, catalyzes the transfer of the phosphoribosyl group of 5-phosphorylribose-1-pyrophosphate (PRPP) to anthranilate to yield N-(5'-phosphoribosyl)-anthranilate (PRA). This chain is Anthranilate phosphoribosyltransferase, found in Methanococcus aeolicus (strain ATCC BAA-1280 / DSM 17508 / OCM 812 / Nankai-3).